We begin with the raw amino-acid sequence, 384 residues long: D-galactosamine-6-phosphate deaminase AgaS (384 aa).

2 consecutive SIS domains span residues leucine 45–phenylalanine 197 and serine 215–proline 364.

Belongs to the SIS family. AgaS subfamily.

It catalyses the reaction D-galactosamine 6-phosphate + H2O = D-tagatopyranose 1-phosphate + NH4(+). In terms of biological role, catalyzes the isomerization-deamination of galactosamine 6-phosphate to form tagatofuranose 6-phosphate and ammonium ion. This chain is D-galactosamine-6-phosphate deaminase AgaS, found in Escherichia coli O157:H7.